Reading from the N-terminus, the 349-residue chain is Core protein VP7 (349 aa).

Asn287 carries N-linked (GlcNAc...) asparagine; by host glycosylation.

It belongs to the orbivirus VP7 family. Homotrimer that assemble in a complex of 260 capsomers on an inner scaffold composed of VP3.

The protein localises to the virion. Functionally, the VP7 protein is one of the five proteins (with VP1, VP3, VP4, and VP6) which form the inner capsid of the virus. The polypeptide is Core protein VP7 (Segment-7) (Antilocapra americana (Pronghorn)).